The chain runs to 1192 residues: Integrator complex subunit 2 (1192 aa).

The chain crosses the membrane as a helical span at residues 420-436; that stretch reads FVSLSFCMLLAFSTLVS.

The protein belongs to the Integrator subunit 2 family. Component of the Integrator complex, composed of core subunits INTS1, INTS2, INTS3, INTS4, INTS5, INTS6, INTS7, INTS8, INTS9/RC74, INTS10, INTS11/CPSF3L, INTS12, INTS13, INTS14 and INTS15. The core complex associates with protein phosphatase 2A subunits PPP2CA and PPP2R1A, to form the Integrator-PP2A (INTAC) complex.

It is found in the nucleus. Its subcellular location is the nucleus membrane. The protein resides in the cytoplasm. Functionally, component of the integrator complex, a multiprotein complex that terminates RNA polymerase II (Pol II) transcription in the promoter-proximal region of genes. The integrator complex provides a quality checkpoint during transcription elongation by driving premature transcription termination of transcripts that are unfavorably configured for transcriptional elongation: the complex terminates transcription by (1) catalyzing dephosphorylation of the C-terminal domain (CTD) of Pol II subunit POLR2A/RPB1 and SUPT5H/SPT5, (2) degrading the exiting nascent RNA transcript via endonuclease activity and (3) promoting the release of Pol II from bound DNA. The integrator complex is also involved in terminating the synthesis of non-coding Pol II transcripts, such as enhancer RNAs (eRNAs), small nuclear RNAs (snRNAs), telomerase RNAs and long non-coding RNAs (lncRNAs). In Gallus gallus (Chicken), this protein is Integrator complex subunit 2 (INTS2).